The chain runs to 467 residues: GTPase Der (467 aa).

EngA-type G domains follow at residues 3-167 (PTLV…PYEE) and 179-352 (PVIA…AAAR). GTP-binding positions include 9–16 (GRPNVGKS), 56–60 (DTGGF), 119–122 (NKTE), 185–192 (GRPNVGKS), 232–236 (DTAGL), and 297–300 (NKWD). In terms of domain architecture, KH-like spans 353 to 437 (AHIPTPKLTR…PLRVEFRTGH (85 aa)). Residues 434 to 467 (RTGHNPYAGKKTPLTEEEARRAHSRRRRNRKKYG) are disordered. Residues 455-467 (AHSRRRRNRKKYG) show a composition bias toward basic residues.

It belongs to the TRAFAC class TrmE-Era-EngA-EngB-Septin-like GTPase superfamily. EngA (Der) GTPase family. Associates with the 50S ribosomal subunit.

GTPase that plays an essential role in the late steps of ribosome biogenesis. The chain is GTPase Der from Nitrosomonas europaea (strain ATCC 19718 / CIP 103999 / KCTC 2705 / NBRC 14298).